The following is a 496-amino-acid chain: Lysosomal Pro-X carboxypeptidase (496 aa).

The N-terminal stretch at 1–21 (MGRRALLLLLLSFLAPWTTIA) is a signal peptide. The propeptide occupies 22–45 (LRPALRALGSLHLPTNPTSLPAVA). N-linked (GlcNAc...) asparagine glycans are attached at residues N47 and N101. S179 functions as the Charge relay system in the catalytic mechanism. The SKS domain stretch occupies residues 194 to 334 (HMVVGALAAS…QNIFQALNVY (141 aa)). Disulfide bonds link C215–C372, C233–C310, C264–C343, and C364–C394. N-linked (GlcNAc...) asparagine glycans are attached at residues N317, N336, and N345. N415 is a glycosylation site (N-linked (GlcNAc...) asparagine). Residues D430 and H455 each act as charge relay system in the active site.

The protein belongs to the peptidase S28 family. Homodimer.

The protein resides in the lysosome. It carries out the reaction Cleavage of a -Pro-|-Xaa bond to release a C-terminal amino acid.. Cleaves C-terminal amino acids linked to proline in peptides such as angiotensin II, III and des-Arg9-bradykinin. This cleavage occurs at acidic pH, but enzymatic activity is retained with some substrates at neutral pH. In Pongo abelii (Sumatran orangutan), this protein is Lysosomal Pro-X carboxypeptidase (PRCP).